The following is a 172-amino-acid chain: Nascent polypeptide-associated complex subunit beta (172 aa).

Disordered regions lie at residues K36 to K58 and Q142 to E172. Basic residues predominate over residues T41 to P50. An NAC-A/B domain is found at G54 to V119.

This sequence belongs to the NAC-beta family. In terms of assembly, part of the nascent polypeptide-associated complex (NAC), consisting of EGD2 and EGD1. NAC associates with ribosomes via EGD1.

It is found in the cytoplasm. Its subcellular location is the nucleus. Component of the nascent polypeptide-associated complex (NAC), a dynamic component of the ribosomal exit tunnel, protecting the emerging polypeptides from interaction with other cytoplasmic proteins to ensure appropriate nascent protein targeting. The NAC complex also promotes mitochondrial protein import by enhancing productive ribosome interactions with the outer mitochondrial membrane and blocks the inappropriate interaction of ribosomes translating non-secretory nascent polypeptides with translocation sites in the membrane of the endoplasmic reticulum. EGD1 may act as a transcription factor that exert a negative effect on the expression of several genes that are transcribed by RNA polymerase II. The polypeptide is Nascent polypeptide-associated complex subunit beta (EGD1) (Pyricularia oryzae (strain 70-15 / ATCC MYA-4617 / FGSC 8958) (Rice blast fungus)).